The sequence spans 396 residues: S-adenosylmethionine synthase (396 aa).

Residue H16 participates in ATP binding. Residue D18 coordinates Mg(2+). E44 contacts K(+). 2 residues coordinate L-methionine: E57 and Q100. Residues 100–110 (QSPDIAQGVDR) are flexible loop. ATP contacts are provided by residues 167–169 (DAK), 232–233 (RF), D241, 247–248 (RK), A264, and K268. D241 serves as a coordination point for L-methionine. K272 provides a ligand contact to L-methionine.

Belongs to the AdoMet synthase family. As to quaternary structure, homotetramer; dimer of dimers. Requires Mg(2+) as cofactor. It depends on K(+) as a cofactor.

Its subcellular location is the cytoplasm. The catalysed reaction is L-methionine + ATP + H2O = S-adenosyl-L-methionine + phosphate + diphosphate. It participates in amino-acid biosynthesis; S-adenosyl-L-methionine biosynthesis; S-adenosyl-L-methionine from L-methionine: step 1/1. Catalyzes the formation of S-adenosylmethionine (AdoMet) from methionine and ATP. The overall synthetic reaction is composed of two sequential steps, AdoMet formation and the subsequent tripolyphosphate hydrolysis which occurs prior to release of AdoMet from the enzyme. The polypeptide is S-adenosylmethionine synthase (Ralstonia pickettii (strain 12J)).